The following is a 75-amino-acid chain: Endogenous retrovirus group K member 5 Np9 protein (75 aa).

Residues 22 to 43 (TAPKRQRPSRTGHDDDGGFVEK) are disordered. Residues 32 to 43 (TGHDDDGGFVEK) show a composition bias toward basic and acidic residues.

It localises to the nucleus. Its function is as follows. May possess a function in tumorigenesis. This chain is Endogenous retrovirus group K member 5 Np9 protein (ERVK-5), found in Homo sapiens (Human).